Reading from the N-terminus, the 769-residue chain is 5-methyltetrahydropteroyltriglutamate--homocysteine methyltransferase (769 aa).

5-methyltetrahydropteroyltri-L-glutamate is bound by residues 16-19 and K118; that span reads RELK. L-homocysteine contacts are provided by residues 440-442 and E493; that span reads IGS. Residues 440 to 442 and E493 each bind L-methionine; that span reads IGS. 5-methyltetrahydropteroyltri-L-glutamate contacts are provided by residues 524 to 525 and W570; that span reads RC. D608 lines the L-homocysteine pocket. D608 contributes to the L-methionine binding site. E614 is a 5-methyltetrahydropteroyltri-L-glutamate binding site. Residues H650, C652, and E674 each coordinate Zn(2+). H706 (proton donor) is an active-site residue. C738 provides a ligand contact to Zn(2+).

This sequence belongs to the vitamin-B12 independent methionine synthase family. The cofactor is Zn(2+).

The enzyme catalyses 5-methyltetrahydropteroyltri-L-glutamate + L-homocysteine = tetrahydropteroyltri-L-glutamate + L-methionine. The protein operates within amino-acid biosynthesis; L-methionine biosynthesis via de novo pathway; L-methionine from L-homocysteine (MetE route): step 1/1. Catalyzes the transfer of a methyl group from 5-methyltetrahydrofolate to homocysteine resulting in methionine formation. This Acidiphilium cryptum (strain JF-5) protein is 5-methyltetrahydropteroyltriglutamate--homocysteine methyltransferase.